The following is a 284-amino-acid chain: Deoxyribonuclease-1 (284 aa).

Residues Met-1 to Thr-22 form the signal peptide. Asn-40 carries N-linked (GlcNAc...) asparagine glycosylation. Glu-100 is an active-site residue. An intrachain disulfide couples Cys-123 to Cys-126. Asn-128 is a glycosylation site (N-linked (GlcNAc...) asparagine). Residue His-156 is part of the active site. An intrachain disulfide couples Cys-195 to Cys-231.

Belongs to the DNase I family. It depends on Ca(2+) as a cofactor. Mg(2+) is required as a cofactor.

The protein localises to the secreted. It is found in the zymogen granule. Its subcellular location is the nucleus envelope. It carries out the reaction Endonucleolytic cleavage to 5'-phosphodinucleotide and 5'-phosphooligonucleotide end-products.. In terms of biological role, serum endocuclease secreted into body fluids by a wide variety of exocrine and endocrine organs. Expressed by non-hematopoietic tissues and preferentially cleaves protein-free DNA. Among other functions, seems to be involved in cell death by apoptosis. Binds specifically to G-actin and blocks actin polymerization. Together with DNASE1L3, plays a key role in degrading neutrophil extracellular traps (NETs). NETs are mainly composed of DNA fibers and are released by neutrophils to bind pathogens during inflammation. Degradation of intravascular NETs by DNASE1 and DNASE1L3 is required to prevent formation of clots that obstruct blood vessels and cause organ damage following inflammation. The chain is Deoxyribonuclease-1 (Dnase1) from Rattus norvegicus (Rat).